Consider the following 69-residue polypeptide: Conotoxin AbVIE (69 aa).

The first 17 residues, 1–17 (VLIIAVLFLTACQLTTA), serve as a signal peptide directing secretion. Residues 18 to 40 (ETSSRGKQKHRALRSTDKYSRMT) constitute a propeptide that is removed on maturation. 3 cysteine pairs are disulfide-bonded: Cys43/Cys57, Cys50/Cys61, and Cys56/Cys66.

The protein belongs to the conotoxin O1 superfamily. As to expression, expressed by the venom duct.

It localises to the secreted. The chain is Conotoxin AbVIE from Conus abbreviatus (Abbreviated cone).